Here is a 492-residue protein sequence, read N- to C-terminus: JmjC domain-containing histone demethylation protein 1 (492 aa).

Residues Pro4–Gly72 form a PHD-type; atypical zinc finger. Residues Thr254–Lys409 enclose the JmjC domain. Thr302 lines the substrate pocket. Residues His305 and Asp307 each coordinate Fe cation. Lys322 lines the substrate pocket. Residue His377 participates in Fe cation binding.

It belongs to the JHDM1 histone demethylase family. Fe(2+) serves as cofactor.

Its subcellular location is the nucleus. The enzyme catalyses N(6),N(6)-dimethyl-L-lysyl(36)-[histone H3] + 2 2-oxoglutarate + 2 O2 = L-lysyl(36)-[histone H3] + 2 formaldehyde + 2 succinate + 2 CO2. Its function is as follows. Histone demethylase that specifically demethylates 'Lys-36' of histone H3, thereby playing a central role in histone code. Does not demethylate H3 'Lys-4' nor 'Lys-79'. In Saccharomyces cerevisiae (strain ATCC 204508 / S288c) (Baker's yeast), this protein is JmjC domain-containing histone demethylation protein 1 (JHD1).